We begin with the raw amino-acid sequence, 84 residues long: MNIFDFLRSRKKETTASIAKERLQIIVAHERGQRSQPDYLPALQQELVEVIRKYVNIESDQVQVALENQGSCSILELNITLPDR.

This sequence belongs to the MinE family.

Prevents the cell division inhibition by proteins MinC and MinD at internal division sites while permitting inhibition at polar sites. This ensures cell division at the proper site by restricting the formation of a division septum at the midpoint of the long axis of the cell. The sequence is that of Cell division topological specificity factor from Ectopseudomonas mendocina (strain ymp) (Pseudomonas mendocina).